The chain runs to 437 residues: GTPase Obg (437 aa).

One can recognise an Obg domain in the interval 2–160 (SMFLDTAKIS…RQLELELKIL (159 aa)). Positions 161 to 338 (ADVGLVGFPS…LLEATAELLA (178 aa)) constitute an OBG-type G domain. GTP is bound by residues 167–174 (GFPSVGKS), 192–196 (FTTIV), 214–217 (DLPG), 284–287 (NKMD), and 319–321 (SSL). The Mg(2+) site is built by S174 and T194. Residues 359 to 437 (GFAETEKDFE…IGKFEFEFVD (79 aa)) enclose the OCT domain.

This sequence belongs to the TRAFAC class OBG-HflX-like GTPase superfamily. OBG GTPase family. In terms of assembly, monomer. The cofactor is Mg(2+).

It localises to the cytoplasm. Functionally, an essential GTPase which binds GTP, GDP and possibly (p)ppGpp with moderate affinity, with high nucleotide exchange rates and a fairly low GTP hydrolysis rate. Plays a role in control of the cell cycle, stress response, ribosome biogenesis and in those bacteria that undergo differentiation, in morphogenesis control. In Streptococcus pyogenes serotype M5 (strain Manfredo), this protein is GTPase Obg.